Consider the following 551-residue polypeptide: Hydroxylamine reductase (551 aa).

Positions 3, 6, 18, and 25 each coordinate [2Fe-2S] cluster. His-249, Glu-273, Cys-317, Cys-405, Cys-433, Cys-459, Glu-493, and Lys-495 together coordinate hybrid [4Fe-2O-2S] cluster. Residue Cys-405 is modified to Cysteine persulfide.

The protein belongs to the HCP family. It depends on [2Fe-2S] cluster as a cofactor. Requires hybrid [4Fe-2O-2S] cluster as cofactor.

The protein resides in the cytoplasm. It carries out the reaction A + NH4(+) + H2O = hydroxylamine + AH2 + H(+). Functionally, catalyzes the reduction of hydroxylamine to form NH(3) and H(2)O. The chain is Hydroxylamine reductase from Actinobacillus pleuropneumoniae serotype 5b (strain L20).